The following is a 180-amino-acid chain: Putative peroxiredoxin YkuU (180 aa).

The Thioredoxin domain occupies 4 to 165; it reads RMVGKQAPRF…TLRVLQALQT (162 aa). Catalysis depends on cysteine 52, which acts as the Cysteine sulfenic acid (-SOH) intermediate.

This sequence belongs to the peroxiredoxin family. AhpC/Prx1 subfamily. In terms of assembly, homodimer; disulfide-linked, upon oxidation.

It is found in the cytoplasm. The enzyme catalyses a hydroperoxide + [protein]-dithiol = [protein]-disulfide + an alcohol + H2O. In terms of biological role, thiol-specific peroxidase that catalyzes the reduction of hydrogen peroxide and organic hydroperoxides to water and alcohols, respectively. Plays a role in cell protection against oxidative stress by detoxifying peroxides. The chain is Putative peroxiredoxin YkuU (ykuU) from Bacillus subtilis (strain 168).